The following is a 426-amino-acid chain: Protein sum2 (426 aa).

Residues 1-80 (MTEFIGSRIS…VKDLRIEEPA (80 aa)) form the Sm domain. Disordered stretches follow at residues 79–100 (PATTPSAPPVQPPNDPAIIGSN), 204–305 (GMPS…AKPR), and 348–426 (SCES…ANDQ). Residues 84 to 93 (SAPPVQPPND) are compositionally biased toward pro residues. Residues 226–237 (VSASPSLQSMPP) are compositionally biased toward polar residues. Residues 261–278 (RNSTVTNDRVVNTTVDVS) show a composition bias toward low complexity. The span at 279 to 298 (QSQTVETSGPSKEVPTTQPD) shows a compositional bias: polar residues. The DFDF domain maps to 296 to 332 (QPDASAAKPRTEFDFQTANQKFQSMKDDLLKGKNDEE). Positions 335–351 (EFYKPKQSFFDNISCES) match the FFD box motif. The segment covering 350-371 (ESKEKGMEAADRRALRDRERSL) has biased composition (basic and acidic residues). Residues 360 to 380 (DRRALRDRERSLNMETFGVAG) carry the TFG box motif. Basic residues predominate over residues 384 to 401 (RGRRGRGRGRGGRGRGRG). Residues 405 to 426 (NQYNQYRNSNGSQPRAQPANDQ) show a composition bias toward polar residues.

Required for G2/M phase checkpoint control. The chain is Protein sum2 (sum2) from Schizosaccharomyces pombe (strain 972 / ATCC 24843) (Fission yeast).